We begin with the raw amino-acid sequence, 397 residues long: Polyphosphatase (397 aa).

Residues aspartate 41, aspartate 127, and histidine 148 each contribute to the Mg(2+) site. The Mn(2+) site is built by aspartate 41, aspartate 127, and histidine 148. ATP contacts are provided by histidine 149, serine 286, and arginine 381.

It belongs to the PPase class C family. Mn(2+) serves as cofactor. Mg(2+) is required as a cofactor.

It catalyses the reaction [phosphate](n) + H2O = [phosphate](n-1) + phosphate + H(+). Functionally, polyphosphatase (polyPase) involved in the degradation of inorganic polyphosphates (polyP) that is able to degrade a range of chains from three to several hundreds of residues in a highly processive manner. Exclusively shows exopolyphosphatase activity, cleaving inside the polyP chain. This chain is Polyphosphatase, found in Saccharomyces cerevisiae (strain ATCC 204508 / S288c) (Baker's yeast).